The primary structure comprises 444 residues: Phosphoglucosamine mutase (444 aa).

The Phosphoserine intermediate role is filled by Ser102. The Mg(2+) site is built by Ser102, Asp241, Asp243, and Asp245. At Ser102 the chain carries Phosphoserine.

The protein belongs to the phosphohexose mutase family. Mg(2+) serves as cofactor. Activated by phosphorylation.

The enzyme catalyses alpha-D-glucosamine 1-phosphate = D-glucosamine 6-phosphate. In terms of biological role, catalyzes the conversion of glucosamine-6-phosphate to glucosamine-1-phosphate. This Glaesserella parasuis serovar 5 (strain SH0165) (Haemophilus parasuis) protein is Phosphoglucosamine mutase.